The sequence spans 722 residues: Solute carrier organic anion transporter family member 4A1 (722 aa).

Residues 1 to 52 (MPLHQLGDKPLTFPSPNSAMENGLDHTPPSRRASPGTPLSPGSLRSAAHSPL) form a disordered region. At 1 to 103 (MPLHQLGDKP…PCLQVLNTPK (103 aa)) the chain is on the cytoplasmic side. Phosphoserine is present on serine 34. Phosphothreonine is present on threonine 37. A phosphoserine mark is found at serine 40, serine 43, serine 46, and serine 50. A helical transmembrane segment spans residues 104-124 (GILFFLCAAAFLQGMTVNGFI). Residues 125–143 (NTVITSLERRYDLHSYQSG) lie on the Extracellular side of the membrane. A helical transmembrane segment spans residues 144–164 (LIASSYDIAACLCLTFVSYFG). The Cytoplasmic segment spans residues 165–170 (GSGHKP). A helical transmembrane segment spans residues 171-195 (RWLGWGVLLMGTGSLVFALPHFTAG). Residues 196–222 (RYEVELDAGVRTCPANPGAVCADSTSG) lie on the Extracellular side of the membrane. A helical membrane pass occupies residues 223-253 (LSRYQLVFMLGQFLHGVGATPLYTLGVTYLD). Over 254 to 272 (ENVKSSCSPVYIAIFYTAA) the chain is Cytoplasmic. The helical transmembrane segment at 273–293 (ILGPAAGYLIGGALLNIYTEM) threads the bilayer. Topologically, residues 294–307 (GRRTELTTESPLWV) are extracellular. A helical membrane pass occupies residues 308–332 (GAWWVGFLGSGAAAFFTAVPILGYP). Residues 333–378 (RQLPGSQRYAVMRAAEMHQLKDSSRGEASNPDFGKTIRDLPLSIWL) lie on the Cytoplasmic side of the membrane. A helical membrane pass occupies residues 379-400 (LLKNPTFILLCLAGATEATLIT). The Extracellular segment spans residues 401–420 (GMSTFSPKFLESQFSLSASE). A helical transmembrane segment spans residues 421-444 (AATLFGYLVVPAGGGGTFLGGFFV). The Cytoplasmic portion of the chain corresponds to 445 to 448 (NKLR). A helical membrane pass occupies residues 449 to 471 (LRGSAVIKFCLFCTVVSLLGILV). Over 472–580 (FSLHCPSVPM…TSTCQRKPLL (109 aa)) the chain is Extracellular. The Kazal-like domain occupies 498–555 (LNLTAPCNAACSCQPEHYSPVCGSDGLMYFSLCHAGCPAATETNVDGQKVYRDCSCIP). Asparagine 499 is a glycosylation site (N-linked (GlcNAc...) asparagine). 3 cysteine pairs are disulfide-bonded: cysteine 504/cysteine 534, cysteine 510/cysteine 530, and cysteine 519/cysteine 553. An N-linked (GlcNAc...) asparagine glycan is attached at asparagine 557. Residues 581-603 (LVFIFVVIFFTFLSSIPALTATL) form a helical membrane-spanning segment. Residues 604–612 (RCVRDPQRS) lie on the Cytoplasmic side of the membrane. Residues 613–638 (FALGIQWIVVRILGGIPGPIAFGWVI) traverse the membrane as a helical segment. Topologically, residues 639-671 (DKACLLWQDQCGQQGSCLVYQNSAMSRYILIMG) are extracellular. Residues 672–689 (LLYKVLGVLFFAIACFLY) traverse the membrane as a helical segment. At 690–722 (KPLSESSDGLETCLPSQSSAPDSATDSQLQSSV) the chain is on the cytoplasmic side. Positions 703–722 (LPSQSSAPDSATDSQLQSSV) are disordered.

It belongs to the organo anion transporter (TC 2.A.60) family. As to expression, widely expressed. Expressed in placental trophoblasts. Expressed in pancreas, kidney, skeletal muscle, liver, lung, brain, heart, colon, small intestine, ovary, testis, prostate, thymus and spleen. In testis, primarily localized to Leydig cells.

It is found in the cell membrane. It catalyses the reaction 3,3',5-triiodo-L-thyronine(out) + L-glutamate(in) = 3,3',5-triiodo-L-thyronine(in) + L-glutamate(out). The enzyme catalyses L-thyroxine(out) + L-glutamate(in) = L-thyroxine(in) + L-glutamate(out). It carries out the reaction estrone 3-sulfate(out) + L-glutamate(in) = estrone 3-sulfate(in) + L-glutamate(out). The catalysed reaction is taurocholate(out) + L-glutamate(in) = taurocholate(in) + L-glutamate(out). It catalyses the reaction 3,3',5-triiodo-L-thyronine(out) = 3,3',5-triiodo-L-thyronine(in). The enzyme catalyses L-thyroxine(out) = L-thyroxine(in). It carries out the reaction 3,3',5'-triiodo-L-thyronine(out) = 3,3',5'-triiodo-L-thyronine(in). The catalysed reaction is estrone 3-sulfate(out) = estrone 3-sulfate(in). It catalyses the reaction 17beta-estradiol 17-O-(beta-D-glucuronate)(out) = 17beta-estradiol 17-O-(beta-D-glucuronate)(in). The enzyme catalyses taurocholate(out) = taurocholate(in). It carries out the reaction prostaglandin E2(out) = prostaglandin E2(in). Its function is as follows. Organic anion antiporter with apparent broad substrate specificity. Recognizes various substrates including thyroid hormones 3,3',5-triiodo-L-thyronine (T3), L-thyroxine (T4) and 3,3',5'-triiodo-L-thyronine (rT3), conjugated steroids such as estrone 3-sulfate and estradiol 17-beta glucuronide, bile acids such as taurocholate and prostanoids such as prostaglandin E2, likely operating in a tissue-specific manner. May be involved in uptake of metabolites from the circulation into organs such as kidney, liver or placenta. Possibly drives the selective transport of thyroid hormones and estrogens coupled to an outward glutamate gradient across the microvillous membrane of the placenta. The transport mechanism, its electrogenicity and potential tissue-specific counterions remain to be elucidated. This is Solute carrier organic anion transporter family member 4A1 (SLCO4A1) from Homo sapiens (Human).